We begin with the raw amino-acid sequence, 369 residues long: Endophilin-A (369 aa).

The 231-residue stretch at 18–248 (TEKMGGAEGT…LQEKRAEAES (231 aa)) folds into the BAR domain. Residues 227–249 (QCADVLRGLQETLQEKRAEAESR) adopt a coiled-coil conformation. Positions 275-294 (GTPSHISSSASPLPSPMRSP) are enriched in low complexity. A disordered region spans residues 275–297 (GTPSHISSSASPLPSPMRSPAKS). The SH3 domain maps to 305-364 (QQQPCCQALYDFDPENPGELGFKENDIITLLNRVDDNWYEGAVNGRTGYFPQSYVQVQVP).

It belongs to the endophilin family.

The protein localises to the cytoplasm. It is found in the membrane. Required presynaptically at the neuromuscular junction. Implicated in synaptic vesicle endocytosis. In Drosophila virilis (Fruit fly), this protein is Endophilin-A.